The following is a 305-amino-acid chain: Methionyl-tRNA formyltransferase (305 aa).

108–111 (SLLP) contributes to the (6S)-5,6,7,8-tetrahydrofolate binding site.

The protein belongs to the Fmt family.

The catalysed reaction is L-methionyl-tRNA(fMet) + (6R)-10-formyltetrahydrofolate = N-formyl-L-methionyl-tRNA(fMet) + (6S)-5,6,7,8-tetrahydrofolate + H(+). In terms of biological role, attaches a formyl group to the free amino group of methionyl-tRNA(fMet). The formyl group appears to play a dual role in the initiator identity of N-formylmethionyl-tRNA by promoting its recognition by IF2 and preventing the misappropriation of this tRNA by the elongation apparatus. In Thermus thermophilus (strain ATCC BAA-163 / DSM 7039 / HB27), this protein is Methionyl-tRNA formyltransferase.